The sequence spans 265 residues: 3-methyl-2-oxobutanoate hydroxymethyltransferase (265 aa).

The Mg(2+) site is built by Asp-45 and Asp-84. Residues Asp-45 to Ser-46, Asp-84, and Lys-112 contribute to the 3-methyl-2-oxobutanoate site. A Mg(2+)-binding site is contributed by Glu-114. Glu-181 acts as the Proton acceptor in catalysis.

It belongs to the PanB family. As to quaternary structure, homodecamer; pentamer of dimers. Requires Mg(2+) as cofactor.

It localises to the cytoplasm. It catalyses the reaction 3-methyl-2-oxobutanoate + (6R)-5,10-methylene-5,6,7,8-tetrahydrofolate + H2O = 2-dehydropantoate + (6S)-5,6,7,8-tetrahydrofolate. The protein operates within cofactor biosynthesis; (R)-pantothenate biosynthesis; (R)-pantoate from 3-methyl-2-oxobutanoate: step 1/2. Catalyzes the reversible reaction in which hydroxymethyl group from 5,10-methylenetetrahydrofolate is transferred onto alpha-ketoisovalerate to form ketopantoate. This Wigglesworthia glossinidia brevipalpis protein is 3-methyl-2-oxobutanoate hydroxymethyltransferase.